Reading from the N-terminus, the 185-residue chain is Lysozyme g (185 aa).

Position 1 is a pyrrolidone carboxylic acid (Gln-1). Intrachain disulfides connect Cys-4-Cys-60 and Cys-18-Cys-29. Catalysis depends on residues Glu-73 and Asp-86.

Belongs to the glycosyl hydrolase 23 family.

Its subcellular location is the secreted. It catalyses the reaction Hydrolysis of (1-&gt;4)-beta-linkages between N-acetylmuramic acid and N-acetyl-D-glucosamine residues in a peptidoglycan and between N-acetyl-D-glucosamine residues in chitodextrins.. In Casuarius casuarius (Southern cassowary), this protein is Lysozyme g.